We begin with the raw amino-acid sequence, 692 residues long: Elongation factor G (692 aa).

The 276-residue stretch at 8–283 folds into the tr-type G domain; that stretch reads NRIRNIGIAA…AVIDYLPAPT (276 aa). GTP is bound by residues 17-24, 81-85, and 135-138; these read AHIDAGKT, DTPGH, and NKMD.

The protein belongs to the TRAFAC class translation factor GTPase superfamily. Classic translation factor GTPase family. EF-G/EF-2 subfamily.

The protein resides in the cytoplasm. Catalyzes the GTP-dependent ribosomal translocation step during translation elongation. During this step, the ribosome changes from the pre-translocational (PRE) to the post-translocational (POST) state as the newly formed A-site-bound peptidyl-tRNA and P-site-bound deacylated tRNA move to the P and E sites, respectively. Catalyzes the coordinated movement of the two tRNA molecules, the mRNA and conformational changes in the ribosome. The protein is Elongation factor G (fusA) of Helicobacter pylori (strain J99 / ATCC 700824) (Campylobacter pylori J99).